A 542-amino-acid polypeptide reads, in one-letter code: Retron Ec83 probable ATPase (542 aa).

Residues Gly-92–Ser-99 carry the ATP-binding motif.

Functionally, probable ATPase component of antiviral defense system retron Ec83, composed of a non-coding RNA (ncRNA), a reverse transcriptase (RT), this protein and a putative HNH endonuclease. Expression of retron Ec83 confers protection against bacteriophage T2, T4 and T6. At multiplicity of infection (MOI) of 0.02 cultures slow growth when infected with T4 but do not collapse, at MOI 2 cultures enter growth stasis. The sequence is that of Retron Ec83 probable ATPase from Escherichia coli.